Here is a 208-residue protein sequence, read N- to C-terminus: N-(5'-phosphoribosyl)anthranilate isomerase (208 aa).

The protein belongs to the TrpF family.

The catalysed reaction is N-(5-phospho-beta-D-ribosyl)anthranilate = 1-(2-carboxyphenylamino)-1-deoxy-D-ribulose 5-phosphate. The protein operates within amino-acid biosynthesis; L-tryptophan biosynthesis; L-tryptophan from chorismate: step 3/5. The protein is N-(5'-phosphoribosyl)anthranilate isomerase of Methanococcus maripaludis (strain C7 / ATCC BAA-1331).